The following is a 53-amino-acid chain: Conotoxin Cal6.31 (53 aa).

The first 24 residues, 1–24, serve as a signal peptide directing secretion; that stretch reads MKLTCVLIAAVLLLAVCQLDSADA. Disulfide bonds link Cys-29–Cys-43, Cys-36–Cys-47, and Cys-42–Cys-51.

The protein belongs to the conotoxin O1 superfamily. In terms of tissue distribution, expressed by the venom duct.

It is found in the secreted. In terms of biological role, probable neurotoxin. This chain is Conotoxin Cal6.31, found in Californiconus californicus (California cone).